A 284-amino-acid chain; its full sequence is Bifunctional protein FolD (284 aa).

Residues 165–167 (GRS) and S190 contribute to the NADP(+) site.

This sequence belongs to the tetrahydrofolate dehydrogenase/cyclohydrolase family. Homodimer.

The catalysed reaction is (6R)-5,10-methylene-5,6,7,8-tetrahydrofolate + NADP(+) = (6R)-5,10-methenyltetrahydrofolate + NADPH. The enzyme catalyses (6R)-5,10-methenyltetrahydrofolate + H2O = (6R)-10-formyltetrahydrofolate + H(+). It participates in one-carbon metabolism; tetrahydrofolate interconversion. Catalyzes the oxidation of 5,10-methylenetetrahydrofolate to 5,10-methenyltetrahydrofolate and then the hydrolysis of 5,10-methenyltetrahydrofolate to 10-formyltetrahydrofolate. The sequence is that of Bifunctional protein FolD from Streptococcus mutans serotype c (strain ATCC 700610 / UA159).